The following is a 767-amino-acid chain: 5-methyltetrahydropteroyltriglutamate--homocysteine methyltransferase (767 aa).

5-methyltetrahydropteroyltri-L-glutamate contacts are provided by residues R17–K20 and K117. L-homocysteine contacts are provided by residues I442–S444 and E495. L-methionine contacts are provided by residues I442–S444 and E495. 5-methyltetrahydropteroyltri-L-glutamate-binding positions include R526–C527 and W572. D610 contributes to the L-homocysteine binding site. D610 lines the L-methionine pocket. E616 is a 5-methyltetrahydropteroyltri-L-glutamate binding site. Residues H653, C655, and E677 each contribute to the Zn(2+) site. The active-site Proton donor is the H706. C738 serves as a coordination point for Zn(2+).

This sequence belongs to the vitamin-B12 independent methionine synthase family. Requires Zn(2+) as cofactor.

It catalyses the reaction 5-methyltetrahydropteroyltri-L-glutamate + L-homocysteine = tetrahydropteroyltri-L-glutamate + L-methionine. It participates in amino-acid biosynthesis; L-methionine biosynthesis via de novo pathway; L-methionine from L-homocysteine (MetE route): step 1/1. In terms of biological role, catalyzes the transfer of a methyl group from 5-methyltetrahydrofolate to homocysteine resulting in methionine formation. The protein is 5-methyltetrahydropteroyltriglutamate--homocysteine methyltransferase of Bifidobacterium animalis subsp. lactis (strain AD011).